A 428-amino-acid chain; its full sequence is U2 small nuclear ribonucleoprotein auxiliary factor 35 kDa subunit-related protein 2-like (428 aa).

Residues 1–51 form a disordered region; sequence MASRQTAIPEKLSRKQYKAAMKKEKRKKRRQKMARLRALEAPPEEDDDVSA. Over residues 23–35 the composition is skewed to basic residues; sequence KEKRKKRRQKMAR. The span at 42 to 51 shows a compositional bias: acidic residues; sequence PPEEDDDVSA. Position 50 is a phosphoserine (S50). The segment at 157 to 185 adopts a C3H1-type 1 zinc-finger fold; the sequence is EKYRPSCPFYNKTGACRFGNRCSRKHDFP. Positions 189–295 constitute an RRM domain; the sequence is PTLLVKSMFT…RQLQCEFCPV (107 aa). The C3H1-type 2 zinc-finger motif lies at 297–324; sequence RWKVAICGLFEMQKCPKGKHCNFLHVFR. The tract at residues 339–428 is disordered; it reads MSPPAWTGSS…PGPQSQSHRT (90 aa). S340 is modified (phosphoserine). The segment covering 351 to 366 has biased composition (basic and acidic residues); the sequence is NSDRRERKDHHEEYYS. The span at 367–377 shows a compositional bias: low complexity; sequence KSRSYHSGSYH. S375 is modified (phosphoserine). Basic residues predominate over residues 389–410; the sequence is SPHRWKKSHKQTTKSHERHSSR. Residues 419–428 show a composition bias toward polar residues; that stretch reads PGPQSQSHRT.

Interacts with SF3B1. Interacts with ZCRB1. In terms of tissue distribution, highest expression levels are detected in the brain, and lower expression levels in other tissues like epididymis, testis, bone marrow or muscle. In testis, expressed in both Sertoli and spermatogenic cell.

The protein resides in the nucleus. In terms of biological role, plays a role in splicing of the U12-type introns. Implicated also in removal of U2 introns positioned adjacent to a U12 intron. In Mus musculus (Mouse), this protein is U2 small nuclear ribonucleoprotein auxiliary factor 35 kDa subunit-related protein 2-like.